A 99-amino-acid polypeptide reads, in one-letter code: Probable small ribosomal subunit protein cS23 (99 aa).

This sequence belongs to the chloroplast-specific ribosomal protein cS23 family. In terms of assembly, part of the 30S ribosomal subunit.

Probably a ribosomal protein or a ribosome-associated protein. This Synechococcus sp. (strain JA-3-3Ab) (Cyanobacteria bacterium Yellowstone A-Prime) protein is Probable small ribosomal subunit protein cS23.